The sequence spans 387 residues: Alpha-sarcoglycan (387 aa).

A signal peptide spans 1-23 (MAATLTWILLFVGLLAGLRDTKA). Topologically, residues 24 to 290 (QQTTLYPLVG…ATGRDFLADA (267 aa)) are extracellular. N-linked (GlcNAc...) asparagine glycosylation is found at Asn-174 and Asn-246. Residues 291 to 311 (LVTLLVPLLVALLLTLLLAYI) traverse the membrane as a helical segment. At 312–387 (MCCRREGQLK…AQVPLILDQH (76 aa)) the chain is on the cytoplasmic side. Ser-377 is modified (phosphoserine).

Belongs to the sarcoglycan alpha/epsilon family. Interacts with the syntrophin SNTA1. Cross-link to form 2 major subcomplexes: one consisting of SGCB, SGCD and SGCG and the other consisting of SGCB and SGCD. The association between SGCB and SGCG is particularly strong while SGCA is loosely associated with the other sarcoglycans. In terms of tissue distribution, strongly expressed in skeletal and heart muscle.

The protein resides in the cell membrane. The protein localises to the sarcolemma. It is found in the cytoplasm. It localises to the cytoskeleton. Functionally, component of the sarcoglycan complex, a subcomplex of the dystrophin-glycoprotein complex which forms a link between the F-actin cytoskeleton and the extracellular matrix. The protein is Alpha-sarcoglycan (SGCA) of Mesocricetus auratus (Golden hamster).